The primary structure comprises 96 residues: ATP synthase subunit c (96 aa).

A run of 2 helical transmembrane segments spans residues 9–29 (FIAC…GCGI) and 58–78 (IGLA…LILI).

This sequence belongs to the ATPase C chain family. In terms of assembly, F-type ATPases have 2 components, F(1) - the catalytic core - and F(0) - the membrane proton channel. F(1) has five subunits: alpha(3), beta(3), gamma(1), delta(1), epsilon(1). F(0) has three main subunits: a(1), b(2) and c(10-14). The alpha and beta chains form an alternating ring which encloses part of the gamma chain. F(1) is attached to F(0) by a central stalk formed by the gamma and epsilon chains, while a peripheral stalk is formed by the delta and b chains.

It is found in the cell inner membrane. Its function is as follows. F(1)F(0) ATP synthase produces ATP from ADP in the presence of a proton or sodium gradient. F-type ATPases consist of two structural domains, F(1) containing the extramembraneous catalytic core and F(0) containing the membrane proton channel, linked together by a central stalk and a peripheral stalk. During catalysis, ATP synthesis in the catalytic domain of F(1) is coupled via a rotary mechanism of the central stalk subunits to proton translocation. Functionally, key component of the F(0) channel; it plays a direct role in translocation across the membrane. A homomeric c-ring of between 10-14 subunits forms the central stalk rotor element with the F(1) delta and epsilon subunits. The sequence is that of ATP synthase subunit c from Desulfosudis oleivorans (strain DSM 6200 / JCM 39069 / Hxd3) (Desulfococcus oleovorans).